The following is a 579-amino-acid chain: Protein alan shepard (579 aa).

Over residues 1–12 (MHPRYSPAPPPQ) the composition is skewed to pro residues. The segment at 1 to 66 (MHPRYSPAPP…GSSSSAAAAP (66 aa)) is disordered. Tyr-5 bears the Phosphotyrosine mark. Low complexity predominate over residues 13-24 (QQQQMGGPPHQQ). The segment covering 25 to 35 (QGGGGGGGGSM) has biased composition (gly residues). A compositionally biased stretch (polar residues) spans 37–54 (GPSNAQQLPPQIPRSQNY). The span at 55–66 (SNGSSSSAAAAP) shows a compositional bias: low complexity. 2 positions are modified to phosphotyrosine: Tyr-125 and Tyr-142. The disordered stretch occupies residues 164-225 (PATTTYGQRV…TVQNQNQQGG (62 aa)). Positions 178–225 (SPSNTNSSSSSNTGSQSGTLSTSLSNTTNTNTNMGPNGTVQNQNQQGG) are enriched in low complexity. RRM domains lie at 231-304 (TNLY…MAKQ) and 310-389 (TNLY…FADG). The interval 553–579 (MTDSEQASTAASPDEAYTQYPHQAAPK) is disordered.

Functionally, has a role in the perception of gravity. The polypeptide is Protein alan shepard (Drosophila sechellia (Fruit fly)).